Reading from the N-terminus, the 518-residue chain is Cytochrome P450 736A117 (518 aa).

N-linked (GlcNAc...) asparagine glycosylation is present at Asn-12. The helical transmembrane segment at 17–37 threads the bilayer; the sequence is FLQPLAFTLLAIFLVLLYTWY. Residues Asn-185, Asn-275, and Asn-356 are each glycosylated (N-linked (GlcNAc...) asparagine). A heme-binding site is contributed by Cys-460.

Belongs to the cytochrome P450 family. Requires heme as cofactor. Expressed at similar levels in fruit kernel, seedlings, leaves, stems and buds.

The protein resides in the membrane. The chain is Cytochrome P450 736A117 from Prunus mume (Japanese apricot).